We begin with the raw amino-acid sequence, 195 residues long: GTP-dependent dephospho-CoA kinase (195 aa).

Asp-49, Val-50, Asp-68, Glu-127, and Asp-150 together coordinate GTP.

This sequence belongs to the GTP-dependent DPCK family.

It carries out the reaction 3'-dephospho-CoA + GTP = GDP + CoA + H(+). The protein operates within cofactor biosynthesis; coenzyme A biosynthesis. Functionally, catalyzes the GTP-dependent phosphorylation of the 3'-hydroxyl group of dephosphocoenzyme A to form coenzyme A (CoA). In Methanosarcina barkeri (strain Fusaro / DSM 804), this protein is GTP-dependent dephospho-CoA kinase.